The sequence spans 32 residues: APCTYPGQQCKSDDECCHGTCKTAFIGRICMR.

Disulfide bonds link cysteine 3–cysteine 17, cysteine 10–cysteine 21, and cysteine 16–cysteine 30.

In terms of tissue distribution, expressed by the venom gland.

The protein localises to the secreted. Functionally, not toxic to mice by intracerebroventricular injection. This Ctenus ornatus (Brazilian spider) protein is U21-ctenitoxin-Co1a.